Here is a 526-residue protein sequence, read N- to C-terminus: Peptide chain release factor 3 (526 aa).

Residues 8–277 (SKRRTFAIIS…GLTRWAPAPQ (270 aa)) enclose the tr-type G domain. Residues 17–24 (SHPDAGKT), 85–89 (DTPGH), and 139–142 (NKLD) contribute to the GTP site.

It belongs to the TRAFAC class translation factor GTPase superfamily. Classic translation factor GTPase family. PrfC subfamily.

It is found in the cytoplasm. In terms of biological role, increases the formation of ribosomal termination complexes and stimulates activities of RF-1 and RF-2. It binds guanine nucleotides and has strong preference for UGA stop codons. It may interact directly with the ribosome. The stimulation of RF-1 and RF-2 is significantly reduced by GTP and GDP, but not by GMP. The chain is Peptide chain release factor 3 from Vibrio atlanticus (strain LGP32) (Vibrio splendidus (strain Mel32)).